A 220-amino-acid polypeptide reads, in one-letter code: GTP cyclohydrolase 1 (220 aa).

Zn(2+)-binding residues include C109, H112, and C180.

This sequence belongs to the GTP cyclohydrolase I family. Toroid-shaped homodecamer, composed of two pentamers of five dimers.

The catalysed reaction is GTP + H2O = 7,8-dihydroneopterin 3'-triphosphate + formate + H(+). Its pathway is cofactor biosynthesis; 7,8-dihydroneopterin triphosphate biosynthesis; 7,8-dihydroneopterin triphosphate from GTP: step 1/1. The chain is GTP cyclohydrolase 1 from Yersinia pseudotuberculosis serotype O:1b (strain IP 31758).